A 394-amino-acid polypeptide reads, in one-letter code: Tryptophan synthase beta chain (394 aa).

Lysine 84 bears the N6-(pyridoxal phosphate)lysine mark.

It belongs to the TrpB family. Tetramer of two alpha and two beta chains. Pyridoxal 5'-phosphate is required as a cofactor.

The enzyme catalyses (1S,2R)-1-C-(indol-3-yl)glycerol 3-phosphate + L-serine = D-glyceraldehyde 3-phosphate + L-tryptophan + H2O. The protein operates within amino-acid biosynthesis; L-tryptophan biosynthesis; L-tryptophan from chorismate: step 5/5. In terms of biological role, the beta subunit is responsible for the synthesis of L-tryptophan from indole and L-serine. The protein is Tryptophan synthase beta chain of Clostridium acetobutylicum (strain ATCC 824 / DSM 792 / JCM 1419 / IAM 19013 / LMG 5710 / NBRC 13948 / NRRL B-527 / VKM B-1787 / 2291 / W).